Consider the following 506-residue polypeptide: Protein nucleotidyltransferase YdiU (506 aa).

ATP contacts are provided by Gly95, Gly97, Arg98, Lys118, Asp130, Gly131, Arg181, and Arg188. The Proton acceptor role is filled by Asp257. Residues Asn258 and Asp267 each contribute to the Mg(2+) site. Residue Asp267 participates in ATP binding. The segment at 487–506 is disordered; sequence KHYQDAPTPDQRVKQTFCGT.

This sequence belongs to the SELO family. The cofactor is Mg(2+). It depends on Mn(2+) as a cofactor.

The enzyme catalyses L-seryl-[protein] + ATP = 3-O-(5'-adenylyl)-L-seryl-[protein] + diphosphate. It catalyses the reaction L-threonyl-[protein] + ATP = 3-O-(5'-adenylyl)-L-threonyl-[protein] + diphosphate. The catalysed reaction is L-tyrosyl-[protein] + ATP = O-(5'-adenylyl)-L-tyrosyl-[protein] + diphosphate. It carries out the reaction L-histidyl-[protein] + UTP = N(tele)-(5'-uridylyl)-L-histidyl-[protein] + diphosphate. The enzyme catalyses L-seryl-[protein] + UTP = O-(5'-uridylyl)-L-seryl-[protein] + diphosphate. It catalyses the reaction L-tyrosyl-[protein] + UTP = O-(5'-uridylyl)-L-tyrosyl-[protein] + diphosphate. In terms of biological role, nucleotidyltransferase involved in the post-translational modification of proteins. It can catalyze the addition of adenosine monophosphate (AMP) or uridine monophosphate (UMP) to a protein, resulting in modifications known as AMPylation and UMPylation. This chain is Protein nucleotidyltransferase YdiU, found in Shewanella denitrificans (strain OS217 / ATCC BAA-1090 / DSM 15013).